Consider the following 387-residue polypeptide: GTP-binding protein 10 (387 aa).

Residues 13-148 enclose the Obg domain; the sequence is GNFIDNLRLF…RVIHLDLKLI (136 aa). Positions 149-344 constitute an OBG-type G domain; that stretch reads ADIGLVGFPN…LKNCIRKSLD (196 aa). GTP-binding positions include 155 to 162, 202 to 206, and 278 to 281; these read GFPNAGKS, DLPGL, and NKMD.

Belongs to the TRAFAC class OBG-HflX-like GTPase superfamily. OBG GTPase family.

It localises to the nucleus. Its subcellular location is the nucleolus. May be involved in the ribosome maturation process. This is GTP-binding protein 10 (GTPBP10) from Bos taurus (Bovine).